The primary structure comprises 777 residues: 1,4-alpha-glucan branching enzyme GlgB (777 aa).

Asp408 serves as the catalytic Nucleophile. Glu461 serves as the catalytic Proton donor.

The protein belongs to the glycosyl hydrolase 13 family. GlgB subfamily. As to quaternary structure, monomer.

The enzyme catalyses Transfers a segment of a (1-&gt;4)-alpha-D-glucan chain to a primary hydroxy group in a similar glucan chain.. It functions in the pathway glycan biosynthesis; glycogen biosynthesis. Functionally, catalyzes the formation of the alpha-1,6-glucosidic linkages in glycogen by scission of a 1,4-alpha-linked oligosaccharide from growing alpha-1,4-glucan chains and the subsequent attachment of the oligosaccharide to the alpha-1,6 position. The sequence is that of 1,4-alpha-glucan branching enzyme GlgB from Actinobacillus pleuropneumoniae serotype 3 (strain JL03).